Here is a 227-residue protein sequence, read N- to C-terminus: MSFLKKSLLLVLFLGLVSHSVCKEEKRETEEENENEEENHEVGSEMKRYAFWYPNRDTEEKNENEEENQEEGSEMKRYAFGYPKREPEEENENEEENHEEGSEMKRYAFEVVGGEAKKMKREPEEENENEEENHEEGSEMKRYAFDVVGGEAKKMKREPEEENENEEENHEEGSEMKRYAFDVVGGEAKKMKREPEEENENEEENHEEGSEMKRYAFDVVGGEAKKM.

Residues 1–20 (MSFLKKSLLLVLFLGLVSHS) form the signal peptide. The propeptide occupies 21–46 (VCKEEKRETEEENENEEENHEVGSEM). Positions 22–227 (CKEEKRETEE…DVVGGEAKKM (206 aa)) are disordered. Acidic residues predominate over residues 30–39 (EEENENEEEN). The residue at position 50 (Ala50) is a D-alanine (Ala). Residues 57 to 75 (DTEEKNENEEENQEEGSEM) constitute a propeptide that is removed on maturation. Residues 62 to 72 (NENEEENQEEG) are compositionally biased toward acidic residues. Residues 73–87 (SEMKRYAFGYPKREP) are compositionally biased toward basic and acidic residues. Position 79 is a D-alanine (Ala) (Ala79). Residues 86–104 (EPEEENENEEENHEEGSEM) constitute a propeptide that is removed on maturation. Residues 88-98 (EEENENEEENH) are compositionally biased toward acidic residues. Positions 99 to 108 (EEGSEMKRYA) are enriched in basic and acidic residues. At Ala108 the chain carries D-alanine (Ala). Gly113 carries the post-translational modification Glycine amide. Positions 115 to 140 (EAKKMKREPEEENENEEENHEEGSEM) are excised as a propeptide. Residues 124–134 (EEENENEEENH) show a composition bias toward acidic residues. The span at 135 to 144 (EEGSEMKRYA) shows a compositional bias: basic and acidic residues. Residue Ala144 is modified to D-alanine (Ala). Gly149 bears the Glycine amide mark. A propeptide spanning residues 151–176 (EAKKMKREPEEENENEEENHEEGSEM) is cleaved from the precursor. Over residues 160-170 (EEENENEEENH) the composition is skewed to acidic residues. Basic and acidic residues predominate over residues 171 to 180 (EEGSEMKRYA). Position 180 is a D-alanine (Ala) (Ala180). At Gly185 the chain carries Glycine amide. The propeptide occupies 187–212 (EAKKMKREPEEENENEEENHEEGSEM). A compositionally biased stretch (acidic residues) spans 196-206 (EEENENEEENH). Positions 207-216 (EEGSEMKRYA) are enriched in basic and acidic residues. Ala216 is modified (D-alanine (Ala)). A Glycine amide modification is found at Gly221. The propeptide occupies 223 to 227 (EAKKM).

It belongs to the frog skin active peptide (FSAP) family. Dermorphin subfamily. As to expression, expressed by the skin glands.

It is found in the secreted. In terms of biological role, deltorphin is a heptapeptide with a very potent opiate-like activity. Has high affinity and selectivity for delta-type opioid receptors. The two dermorphin-like peptides have a similar affinity and selectivity for the mu opioid receptor as dermorphin. This chain is [D-Ala2]-deltorphins, found in Phyllomedusa bicolor (Two-colored leaf frog).